Reading from the N-terminus, the 366-residue chain is Carbamoyl phosphate synthase small chain (366 aa).

The interval 1–170 (MLKKRYLVLE…TKSPYVSTGY (170 aa)) is CPSase. L-glutamine is bound by residues serine 47, glycine 221, and glycine 223. A Glutamine amidotransferase type-1 domain is found at 173 to 360 (SVVLVDFGKK…IDMINEYKTK (188 aa)). Cysteine 248 (nucleophile) is an active-site residue. Leucine 249, glutamine 252, asparagine 290, glycine 292, and tyrosine 293 together coordinate L-glutamine. Active-site residues include histidine 333 and glutamate 335.

The protein belongs to the CarA family. In terms of assembly, composed of two chains; the small (or glutamine) chain promotes the hydrolysis of glutamine to ammonia, which is used by the large (or ammonia) chain to synthesize carbamoyl phosphate. Tetramer of heterodimers (alpha,beta)4.

It carries out the reaction hydrogencarbonate + L-glutamine + 2 ATP + H2O = carbamoyl phosphate + L-glutamate + 2 ADP + phosphate + 2 H(+). It catalyses the reaction L-glutamine + H2O = L-glutamate + NH4(+). It participates in amino-acid biosynthesis; L-arginine biosynthesis; carbamoyl phosphate from bicarbonate: step 1/1. The protein operates within pyrimidine metabolism; UMP biosynthesis via de novo pathway; (S)-dihydroorotate from bicarbonate: step 1/3. Small subunit of the glutamine-dependent carbamoyl phosphate synthetase (CPSase). CPSase catalyzes the formation of carbamoyl phosphate from the ammonia moiety of glutamine, carbonate, and phosphate donated by ATP, constituting the first step of 2 biosynthetic pathways, one leading to arginine and/or urea and the other to pyrimidine nucleotides. The small subunit (glutamine amidotransferase) binds and cleaves glutamine to supply the large subunit with the substrate ammonia. The protein is Carbamoyl phosphate synthase small chain of Staphylococcus saprophyticus subsp. saprophyticus (strain ATCC 15305 / DSM 20229 / NCIMB 8711 / NCTC 7292 / S-41).